The chain runs to 223 residues: Endonuclease NucS (223 aa).

Belongs to the NucS endonuclease family.

The protein resides in the cytoplasm. In terms of biological role, cleaves both 3' and 5' ssDNA extremities of branched DNA structures. The sequence is that of Endonuclease NucS from Mycobacterium marinum (strain ATCC BAA-535 / M).